We begin with the raw amino-acid sequence, 289 residues long: ATP synthase subunit a (289 aa).

Transmembrane regions (helical) follow at residues 43–63, 103–123, 160–180, 193–213, 232–252, and 259–279; these read AFHL…LFIF, VIAP…AVDL, FCVF…GGFI, IFVQ…TLIA, VFIL…GLGV, and AVFH…LTIV.

It belongs to the ATPase A chain family. F-type ATPases have 2 components, CF(1) - the catalytic core - and CF(0) - the membrane proton channel. CF(1) has five subunits: alpha(3), beta(3), gamma(1), delta(1), epsilon(1). CF(0) has three main subunits: a(1), b(2) and c(9-12). The alpha and beta chains form an alternating ring which encloses part of the gamma chain. CF(1) is attached to CF(0) by a central stalk formed by the gamma and epsilon chains, while a peripheral stalk is formed by the delta and b chains.

Its subcellular location is the cell inner membrane. Functionally, key component of the proton channel; it plays a direct role in the translocation of protons across the membrane. The chain is ATP synthase subunit a from Pseudomonas putida (strain GB-1).